The following is a 75-amino-acid chain: Defensin J1-1 (75 aa).

The N-terminal stretch at 1 to 27 (MAGFSKVVATIFLMMLLVFATDMMAEA) is a signal peptide. 4 cysteine pairs are disulfide-bonded: cysteine 30-cysteine 74, cysteine 41-cysteine 61, cysteine 47-cysteine 68, and cysteine 51-cysteine 70.

The protein belongs to the DEFL family. In terms of assembly, monomer. As to expression, expressed in orange and red ripe fruit and to a lesser extent in mature, green fruit. Present in trace in young, green fruit.

Its subcellular location is the secreted. Plant defense peptide with antifungal activity against F.oxysporum and B.cinerea. This is Defensin J1-1 from Capsicum annuum (Capsicum pepper).